The primary structure comprises 748 residues: Catalase-peroxidase (748 aa).

Positions 92 to 238 (WHSAGTYRIG…LAAVQMGLIY (147 aa)) form a cross-link, tryptophyl-tyrosyl-methioninium (Trp-Tyr) (with M-264). The Proton acceptor role is filled by His-93. Residues 238 to 264 (YVNPEGPDGNPDPIASARDIRDTFARM) constitute a cross-link (tryptophyl-tyrosyl-methioninium (Tyr-Met) (with W-92)). His-279 is a binding site for heme b.

Belongs to the peroxidase family. Peroxidase/catalase subfamily. Homodimer or homotetramer. Requires heme b as cofactor. In terms of processing, formation of the three residue Trp-Tyr-Met cross-link is important for the catalase, but not the peroxidase activity of the enzyme.

The catalysed reaction is H2O2 + AH2 = A + 2 H2O. The enzyme catalyses 2 H2O2 = O2 + 2 H2O. In terms of biological role, bifunctional enzyme with both catalase and broad-spectrum peroxidase activity. In Xanthomonas axonopodis pv. citri (strain 306), this protein is Catalase-peroxidase.